Consider the following 507-residue polypeptide: Lysine--tRNA ligase (507 aa).

Residues Glu406 and Glu413 each coordinate Mg(2+).

It belongs to the class-II aminoacyl-tRNA synthetase family. Homodimer. It depends on Mg(2+) as a cofactor.

The protein resides in the cytoplasm. It carries out the reaction tRNA(Lys) + L-lysine + ATP = L-lysyl-tRNA(Lys) + AMP + diphosphate. In Wolinella succinogenes (strain ATCC 29543 / DSM 1740 / CCUG 13145 / JCM 31913 / LMG 7466 / NCTC 11488 / FDC 602W) (Vibrio succinogenes), this protein is Lysine--tRNA ligase.